A 475-amino-acid polypeptide reads, in one-letter code: Stromelysin-1 (475 aa).

An N-terminal signal peptide occupies residues methionine 1–serine 17. Positions tyrosine 18–glycine 97 are cleaved as a propeptide — activation peptide. The Cysteine switch motif lies at proline 88–valine 95. Cysteine 90 lines the Zn(2+) pocket. A glycan (N-linked (GlcNAc...) asparagine) is linked at asparagine 118. Ca(2+)-binding residues include aspartate 122 and aspartate 156. Zn(2+) contacts are provided by histidine 166 and aspartate 168. 4 residues coordinate Ca(2+): aspartate 173, glycine 174, glycine 176, and valine 178. Residue histidine 181 participates in Zn(2+) binding. Positions 188, 190, and 192 each coordinate Ca(2+). Residue histidine 194 coordinates Zn(2+). Aspartate 196, aspartate 197, and glutamate 199 together coordinate Ca(2+). Histidine 216 contacts Zn(2+). Glutamate 217 is a catalytic residue. Zn(2+)-binding residues include histidine 220 and histidine 226. Hemopexin repeat units lie at residues leucine 285 to leucine 334, proline 335 to glutamate 381, valine 383 to isoleucine 431, and glycine 432 to cysteine 475. Cysteine 288 and cysteine 475 form a disulfide bridge. Aspartate 295 provides a ligand contact to Ca(2+). Aspartate 387 and aspartate 436 together coordinate Ca(2+).

It belongs to the peptidase M10A family. It depends on Ca(2+) as a cofactor. Zn(2+) serves as cofactor.

The protein resides in the secreted. It is found in the extracellular space. It localises to the extracellular matrix. It carries out the reaction Preferential cleavage where P1', P2' and P3' are hydrophobic residues.. With respect to regulation, inhibited by a synthetic peptide corresponding to the inhibitory cysteine switch motif. Inhibited by ethylenediaminetetraacetic acid (EDTA), 1,10-pheanthroline, 2-mecaptoethanol, dithiothreitol and metalloproteinase inhibitor protein TIMP. Its function is as follows. Can degrade fibronectin, laminin, gelatins of type I, III, IV, and V; collagens III, IV, X, and IX, and cartilage proteoglycans. Activates procollagenase. Functionally, metalloproteinase with a rather broad substrate specificity that can degrade fibronectin, laminin, gelatins of type I, III, IV, and V; collagens III, IV, X, and IX, and cartilage proteoglycans. Activates different molecules including growth factors, plasminogen or other matrix metalloproteinases such as MMP9. Once released into the extracellular matrix (ECM), the inactive pro-enzyme is activated by the plasmin cascade signaling pathway. Also acts intracellularly. For example, in dopaminergic neurons, gets activated by the serine protease HTRA2 upon stress and plays a pivotal role in DA neuronal degeneration by mediating microglial activation and alpha-synuclein/SNCA cleavage. In addition, plays a role in immune response and possesses antiviral activity against various viruses. Mechanistically, translocates from the cytoplasm into the cell nucleus upon virus infection to influence NF-kappa-B activities. The sequence is that of Stromelysin-1 (Mmp3) from Rattus norvegicus (Rat).